The following is a 257-amino-acid chain: Succinate dehydrogenase subunit 5, mitochondrial (257 aa).

The N-terminal 89 residues, 1–89, are a transit peptide targeting the mitochondrion; that stretch reads MGTLGRAIHT…AMGMGQVRRF (89 aa).

As to quaternary structure, component of complex II composed of eight subunits in plants: four classical SDH subunits SDH1, SDH2, SDH3 and SDH4 (a flavoprotein (FP), an iron-sulfur protein (IP), and a cytochrome b composed of a large and a small subunit.), as well as four subunits unknown in mitochondria from bacteria and heterotrophic eukaryotes.

Its subcellular location is the mitochondrion inner membrane. It participates in carbohydrate metabolism; tricarboxylic acid cycle. This chain is Succinate dehydrogenase subunit 5, mitochondrial, found in Arabidopsis thaliana (Mouse-ear cress).